Consider the following 401-residue polypeptide: Acetate kinase (401 aa).

N7 contacts Mg(2+). Residue K14 coordinates ATP. Substrate is bound at residue R90. The active-site Proton donor/acceptor is the D147. Residues H207–G211, D282–R284, and G330–N334 contribute to the ATP site. E383 lines the Mg(2+) pocket.

It belongs to the acetokinase family. In terms of assembly, homodimer. The cofactor is Mg(2+). Requires Mn(2+) as cofactor.

The protein localises to the cytoplasm. The enzyme catalyses acetate + ATP = acetyl phosphate + ADP. Its pathway is metabolic intermediate biosynthesis; acetyl-CoA biosynthesis; acetyl-CoA from acetate: step 1/2. Catalyzes the formation of acetyl phosphate from acetate and ATP. Can also catalyze the reverse reaction. In Clostridium novyi (strain NT), this protein is Acetate kinase.